The sequence spans 201 residues: Recombination protein RecR (201 aa).

The C4-type zinc-finger motif lies at Cys-60–Cys-75. Positions Ala-83 to Pro-178 constitute a Toprim domain.

It belongs to the RecR family.

Its function is as follows. May play a role in DNA repair. It seems to be involved in an RecBC-independent recombinational process of DNA repair. It may act with RecF and RecO. In Rhizobium meliloti (strain 1021) (Ensifer meliloti), this protein is Recombination protein RecR.